Here is a 78-residue protein sequence, read N- to C-terminus: Protein SlyX homolog (78 aa).

This sequence belongs to the SlyX family.

The polypeptide is Protein SlyX homolog (Xylella fastidiosa (strain M23)).